A 440-amino-acid chain; its full sequence is MIGRISRFMTRFVSRWLPDPLIFAMLLTLLTFVIALWLTPQTPISMVKMWGDGFWNLLAFGMQMALIIVTGHALASSAPVKSLLRTAASAAKTPVQGVMLVTFFGSVACVINWGFGLVVGAMFAREVARRVPGSDYPLLIACAYIGFLTWGGGFSGSMPLLAATPGNPVEHIAGLIPVGDTLFSGFNIFITVALIVVMPFITRMMMPKPSDVVSIDPKLLMEEADFQKQLPKDAPPSERLEESRILTLIIGALGIAYLAMYFSEHGFNITINTVNLMFMIAGLLLHKTPMAYMRAISAAARSTAGILVQFPFYAGIQLMMEHSGLGGLITEFFINVANKDTFPVMTFFSSALINFAVPSGGGHWVIQGPFVIPAAQALGADLGKSVMAIAYGEQWMNMAQPFWALPALAIAGLGVRDIMGYCITALLFSGVIFVIGLTLF.

The Periplasmic portion of the chain corresponds to 1–19 (MIGRISRFMTRFVSRWLPD). A helical transmembrane segment spans residues 20-40 (PLIFAMLLTLLTFVIALWLTP). Residues 41–53 (QTPISMVKMWGDG) lie on the Cytoplasmic side of the membrane. A helical membrane pass occupies residues 54 to 74 (FWNLLAFGMQMALIIVTGHAL). At 75-102 (ASSAPVKSLLRTAASAAKTPVQGVMLVT) the chain is on the periplasmic side. Residues 103 to 123 (FFGSVACVINWGFGLVVGAMF) form a helical membrane-spanning segment. Over 124–137 (AREVARRVPGSDYP) the chain is Cytoplasmic. 2 helical membrane-spanning segments follow: residues 138 to 158 (LLIA…SGSM) and 159 to 179 (PLLA…IPVG). Asp180 is a topological domain (cytoplasmic). Residues 181–201 (TLFSGFNIFITVALIVVMPFI) form a helical membrane-spanning segment. The Periplasmic segment spans residues 202–244 (TRMMMPKPSDVVSIDPKLLMEEADFQKQLPKDAPPSERLEESR). 2 helical membrane-spanning segments follow: residues 245 to 265 (ILTL…FSEH) and 266 to 286 (GFNI…LLLH). Over 287–313 (KTPMAYMRAISAAARSTAGILVQFPFY) the chain is Periplasmic. The helical transmembrane segment at 314 to 334 (AGIQLMMEHSGLGGLITEFFI) threads the bilayer. Residues 335 to 351 (NVANKDTFPVMTFFSSA) lie on the Cytoplasmic side of the membrane. A helical membrane pass occupies residues 352–372 (LINFAVPSGGGHWVIQGPFVI). Over 373-394 (PAAQALGADLGKSVMAIAYGEQ) the chain is Periplasmic. The chain crosses the membrane as a helical span at residues 395 to 415 (WMNMAQPFWALPALAIAGLGV). At 416-419 (RDIM) the chain is on the cytoplasmic side. Residues 420-440 (GYCITALLFSGVIFVIGLTLF) form a helical membrane-spanning segment.

It is found in the cell inner membrane. May be responsible for the uptake of short-chain fatty acids. The polypeptide is Putative short-chain fatty acid transporter (atoE) (Escherichia coli (strain K12)).